Reading from the N-terminus, the 324-residue chain is Aldo-keto reductase family 1 member C15 (324 aa).

NADP(+) is bound by residues threonine 24 to alanine 26 and aspartate 51. Tyrosine 56 (proton donor) is an active-site residue. Histidine 118 serves as a coordination point for substrate. Residues serine 167–asparagine 168, glutamine 191, tyrosine 217–aspartate 225, and leucine 269–asparagine 281 each bind NADP(+).

Belongs to the aldo/keto reductase family. In terms of assembly, monomer. Expressed in lung, specifically in bronchiolar club cells, type II alveolar cells and epithelial cells of the duct of the bronchial gland (at protein level). Expressed in gastric parietal cells and in epithelial cells of the large intestine and colon (at protein level). Expressed in brown adipocytes (at protein level). Expressed in vascular endothelial cells (at protein level).

It is found in the cytoplasm. It carries out the reaction (2E,6E)-farnesol + NADP(+) = (2E,6E)-farnesal + NADPH + H(+). With respect to regulation, the dehydrogenase activity is inhibited by 3',3'',5',5''-tetraiodophenolphthalein, phenolphthalein, genistein, quercetin, zearalenone and diethylstilbestrol. Functionally, catalyzes the NADPH-dependent reduction of a variety of substrates including aromatic and aliphatic aldehydes, quinones, ketones, dicarbonyl compounds and 17-ketosteroids. Catalyzes the NADP(+)-dependent oxidation of aromatic, alicyclic and aliphatic alcohols, and 17beta-hydroxysteroids. To a lesser extent, can also catalyze the reduction of some aldoses and ketoses and the oxidation of some sugar alcohols. In the stomach, lung and colon tissues, mediates the reduction of farnesal and geranylgeranial into farnesol and geranylgeraniol respectively. By reducing 4-hydroxy-2-nonenal (HNE), produced during lipid peroxidation, into 1,4-dihydro-2-nonene (DHN), protects vascular endothelial cells from damage elicited by oxidized lipoproteins. The polypeptide is Aldo-keto reductase family 1 member C15 (Rattus norvegicus (Rat)).